Here is an 883-residue protein sequence, read N- to C-terminus: Valine--tRNA ligase (883 aa).

Residues 51–61 (PNVTGKLHLGH) carry the 'HIGH' region motif. The 'KMSKS' region motif lies at 527 to 531 (KMSKS). Lys530 serves as a coordination point for ATP. The stretch at 811–847 (LEALIDLNVEIARLEKELEKWNKEVARVQGKLNNERF) forms a coiled coil.

Belongs to the class-I aminoacyl-tRNA synthetase family. ValS type 1 subfamily. Monomer.

The protein localises to the cytoplasm. The catalysed reaction is tRNA(Val) + L-valine + ATP = L-valyl-tRNA(Val) + AMP + diphosphate. Its function is as follows. Catalyzes the attachment of valine to tRNA(Val). As ValRS can inadvertently accommodate and process structurally similar amino acids such as threonine, to avoid such errors, it has a 'posttransfer' editing activity that hydrolyzes mischarged Thr-tRNA(Val) in a tRNA-dependent manner. This is Valine--tRNA ligase from Listeria monocytogenes serovar 1/2a (strain ATCC BAA-679 / EGD-e).